A 280-amino-acid polypeptide reads, in one-letter code: Large ribosomal subunit protein uL2 (280 aa).

Disordered stretches follow at residues 1-47 and 224-280; these read MAIR…NVHG and VVMN…SKKR. The segment covering 23–33 has biased composition (basic and acidic residues); that stretch reads EITRSTPEKSL. Over residues 37–47 the composition is skewed to basic residues; that stretch reads LPKKGGRNVHG. Residues 258 to 268 are compositionally biased toward polar residues; it reads RNPNRYSNNMI. A compositionally biased stretch (basic residues) spans 270–280; the sequence is QRRRTNKSKKR.

Belongs to the universal ribosomal protein uL2 family. Part of the 50S ribosomal subunit. Forms a bridge to the 30S subunit in the 70S ribosome.

One of the primary rRNA binding proteins. Required for association of the 30S and 50S subunits to form the 70S ribosome, for tRNA binding and peptide bond formation. It has been suggested to have peptidyltransferase activity; this is somewhat controversial. Makes several contacts with the 16S rRNA in the 70S ribosome. This is Large ribosomal subunit protein uL2 from Corynebacterium diphtheriae (strain ATCC 700971 / NCTC 13129 / Biotype gravis).